A 308-amino-acid chain; its full sequence is UDP-N-acetylenolpyruvoylglucosamine reductase (308 aa).

One can recognise an FAD-binding PCMH-type domain in the interval 22-185 (RVGGPADWLF…VEAAFRADAG (164 aa)). The active site involves Arg165. A compositionally biased stretch (basic and acidic residues) spans 197-211 (QIARRDSSQPTRDRS). Residues 197–228 (QIARRDSSQPTRDRSAGSTFRNPAGFSSTGRA) are disordered. Over residues 212-226 (AGSTFRNPAGFSSTG) the composition is skewed to polar residues. The active-site Proton donor is Ser214. Glu296 is a catalytic residue.

This sequence belongs to the MurB family. Requires FAD as cofactor.

It is found in the cytoplasm. It catalyses the reaction UDP-N-acetyl-alpha-D-muramate + NADP(+) = UDP-N-acetyl-3-O-(1-carboxyvinyl)-alpha-D-glucosamine + NADPH + H(+). It functions in the pathway cell wall biogenesis; peptidoglycan biosynthesis. Its function is as follows. Cell wall formation. The protein is UDP-N-acetylenolpyruvoylglucosamine reductase of Cereibacter sphaeroides (strain ATCC 17025 / ATH 2.4.3) (Rhodobacter sphaeroides).